A 399-amino-acid polypeptide reads, in one-letter code: F420-dependent formate dehydrogenase subunit beta (399 aa).

4Fe-4S ferredoxin-type domains lie at 287–307 and 339–367; these read TEYM…EACP and ERML…LAKI. [4Fe-4S] cluster is bound by residues Cys-296, Cys-299, Cys-302, Cys-306, Cys-348, Cys-351, Cys-354, and Cys-358.

The protein belongs to the FrhB family. As to quaternary structure, dimer of an alpha (FdhA) and a beta (FdhB) subunit. [4Fe-4S] cluster serves as cofactor. It depends on FAD as a cofactor. Zn(2+) is required as a cofactor.

It carries out the reaction oxidized coenzyme F420-(gamma-L-Glu)(n) + formate + 2 H(+) = reduced coenzyme F420-(gamma-L-Glu)(n) + CO2. Is extremely sensitive to oxygen. Contains a FAD that is required for coenzyme F420-dependent activity but not for methyl viologen-dependent activity. Preincubation of the FAD-depleted enzyme with FAD restores coenzyme F420-dependent activity. Neither FMN nor FADH2 can replace FAD. Strongly inhibited by cyanide, azide, alpha,alpha-dipyridyl and 1,10-phenanthroline. Catalyzes the oxidation of formate to carbon dioxide, with coenzyme F420 as the electron acceptor. In vitro can also use methyl viologen, 7,8-didemethyl-8-hydroxy-5-deazariboflavin (or FO, a hydrolytic derivative of coenzyme F420), FMN and FAD as electron acceptors, but not NAD(+) or NADP(+). The protein is F420-dependent formate dehydrogenase subunit beta of Methanobacterium formicicum.